Consider the following 481-residue polypeptide: Endoplasmic reticulum lectin 1 (481 aa).

The signal sequence occupies residues 1-27 (MRRSDRLRCAGASLLVVLCGVFRSSFG). MRH domains follow at residues 108-245 (SSCS…LCNH) and 340-467 (SYCF…ICKI). Cystine bridges form between Cys-110–Cys-123, Cys-198–Cys-231, Cys-214–Cys-243, Cys-342–Cys-355, Cys-419–Cys-453, and Cys-434–Cys-465.

The protein resides in the endoplasmic reticulum lumen. Probable lectin that binds selectively to improperly folded lumenal proteins. May function in endoplasmic reticulum quality control and endoplasmic reticulum-associated degradation (ERAD) of both non-glycosylated proteins and glycoproteins. This Xenopus tropicalis (Western clawed frog) protein is Endoplasmic reticulum lectin 1 (erlec1).